A 100-amino-acid chain; its full sequence is MRTLTILTAVLLVALQAKAEPLQAEDDPLQAKAYEADAQEQRGANDQDFAVSFAEDASSSLRALGSTRAFTCHCRRSCYSTEYSYGTCTVMGINHRFCCL.

Residues 1 to 19 form the signal peptide; sequence MRTLTILTAVLLVALQAKA. Residues 20-68 constitute a propeptide that is removed on maturation; it reads EPLQAEDDPLQAKAYEADAQEQRGANDQDFAVSFAEDASSSLRALGSTR. Cystine bridges form between Cys-72–Cys-99, Cys-74–Cys-88, and Cys-78–Cys-98.

This sequence belongs to the alpha-defensin family. Homodimer. Self-assembles into higher-order oligomers termed nanonets, fibril-like structures that entrap microbes. Self-assembly into nanonets seems to protect against proteolytic digestion in duodenal fluid. Interacts with Y.enterocolitica invasin and S.typhimurium fliC/flagellin; the interaction creates an anchoring site for progressive DEFA6 self-assembly into nanonets. Post-translationally, proteolytically cleaved by trypsin at Arg-68; the propeptide is stored in the tissue of the small intestine and the mature peptide is found in the luminal fluid; cleavage may occur during or after release into the lumen. The N-terminal propeptide region suppresses self-assembly and renders DEFA6 propeptide unable to agglutinate bacteria and protect human epithelial cells from bacterial invasion. Under reducing conditions, naturally present in the gut owing to the low redox potential or enzymatically generated by the thioredoxin system, the disulfide bridges are opened leading to a conformational change of DEF6, thereby changing its antimicrobial spectrum. The reduced form exhibits inhibitory activity against anaerobic bacteria, in contrast to the minimal antimicrobial activity of the disulfide-linked oxidized form. The formation of higher-order nanonets and bacterial entrapment is independent of the redox state. Expressed in Paneth cells of the small intestine (at protein level).

The protein localises to the secreted. Its subcellular location is the cytoplasmic vesicle. It localises to the secretory vesicle. Functionally, host-defense peptide that contributes to intestinal innate immunity and mediates homeostasis at mucosal surfaces by forming higher-order oligomers that capture bacteria and prevent microbial invasion of the epithelium. After binding to bacterial surface proteins, undergoes ordered self-assembly to form fibril-like nanonets that surround and entangle bacteria and thereby prevent bacterial invasion across the epithelial barrier. Entangles and agglutinates Gram-negative bacteria, such as E.coli, S.typhimurium and Y.enterocolitica, and Gram-positive bacteria such as L.monocytogenes, thereby protecting the intestine against invasion by enteric bacterial pathogens. Blocks adhesion of C.albicans to intestinal epithelial cells and thereby suppresses fungal invasion of epithelial cells and biofilm formation. Under reducing conditions and in an acidic environment similar to the intestinal milieu, exhibits inhibitory activity against anaerobic bacteria such as B.adolescentis, L.acidophilus and B.breve, as well as B.longum and S.thermophilus, possibly by leading to alterations in bacterial cell envelope structures. The disulfide-linked oxidized form exhibits negligible antimicrobial activity against Gram-negative and Gram-positive bacteria, as compared to the enteric defensin DEFA5. The sequence is that of Defensin-6 (DEFA6) from Homo sapiens (Human).